Here is an 82-residue protein sequence, read N- to C-terminus: Cortexin-1 (82 aa).

Residues 1-20 (MSAPWTLSPEPLPPSTGPPV) are disordered. Residues 30–50 (TVFAFVLCLLVVLVLLMVRCV) form a helical membrane-spanning segment.

Belongs to the cortexin family. In terms of tissue distribution, neuron specific.

It is found in the membrane. Functionally, may mediate extracellular or intracellular signaling of cortical neurons during forebrain development. In Rattus norvegicus (Rat), this protein is Cortexin-1 (Ctxn1).